A 441-amino-acid chain; its full sequence is 3-phosphoshikimate 1-carboxyvinyltransferase (441 aa).

Over residues 1–10 the composition is skewed to polar residues; the sequence is MSVTSTASSS. The interval 1–21 is disordered; the sequence is MSVTSTASSSRELRAGGGLSG. 3 residues coordinate 3-phosphoshikimate: Lys-29, Ser-30, and Arg-34. Position 29 (Lys-29) interacts with phosphoenolpyruvate. Residues Gly-103 and Arg-132 each contribute to the phosphoenolpyruvate site. 3-phosphoshikimate is bound by residues Ser-177, Gln-179, Asp-328, and Lys-355. Gln-179 is a phosphoenolpyruvate binding site. Asp-328 functions as the Proton acceptor in the catalytic mechanism. 2 residues coordinate phosphoenolpyruvate: Arg-359 and Arg-401.

Belongs to the EPSP synthase family. In terms of assembly, monomer.

The protein resides in the cytoplasm. The catalysed reaction is 3-phosphoshikimate + phosphoenolpyruvate = 5-O-(1-carboxyvinyl)-3-phosphoshikimate + phosphate. Its pathway is metabolic intermediate biosynthesis; chorismate biosynthesis; chorismate from D-erythrose 4-phosphate and phosphoenolpyruvate: step 6/7. Functionally, catalyzes the transfer of the enolpyruvyl moiety of phosphoenolpyruvate (PEP) to the 5-hydroxyl of shikimate-3-phosphate (S3P) to produce enolpyruvyl shikimate-3-phosphate and inorganic phosphate. This is 3-phosphoshikimate 1-carboxyvinyltransferase from Prochlorococcus marinus (strain MIT 9303).